A 99-amino-acid polypeptide reads, in one-letter code: Large ribosomal subunit protein uL23 (99 aa).

Belongs to the universal ribosomal protein uL23 family. In terms of assembly, part of the 50S ribosomal subunit. Contacts protein L29, and trigger factor when it is bound to the ribosome.

One of the early assembly proteins it binds 23S rRNA. One of the proteins that surrounds the polypeptide exit tunnel on the outside of the ribosome. Forms the main docking site for trigger factor binding to the ribosome. This chain is Large ribosomal subunit protein uL23, found in Saccharopolyspora erythraea (strain ATCC 11635 / DSM 40517 / JCM 4748 / NBRC 13426 / NCIMB 8594 / NRRL 2338).